A 400-amino-acid polypeptide reads, in one-letter code: MAKAKFERTKPHVNIGTIGHVDHGKTTLTAAITKVLALKGKAQFMAYDQIDKAPEERERGITINTAHVEYETDARHYAHVDCPGHADYVKNMITGAAQMDGAILVVSAADGPMPQTREHILLARQVNVPYIVVFLNKVDMVDDPELIELVEMEVRELLSKYGYPGDEVPIVKGSALKALESTSQDPNAPEYQCILELMDAVDKYIPTPQRDIDKPFLMPIEDVFSITGRGTVVTGRVERGTLKTGEEVEIVGFAPEPRKTVVTGIEMFRKVLDEAVAGDNVGCLLRGIQKNEVERGQVLAKPGTIKPHTKFKAQVYVLTKEEGGRHTPFFNGYRPQFYFRTTDVTGTITLPEGVEMCMPGDNVEMTVELISPIAIESGLRFAIREGGRTVGAGSVTTIIE.

Residues 10–209 (KPHVNIGTIG…AVDKYIPTPQ (200 aa)) form the tr-type G domain. A G1 region spans residues 19–26 (GHVDHGKT). GTP is bound at residue 19–26 (GHVDHGKT). Thr-26 provides a ligand contact to Mg(2+). Residues 60–64 (GITIN) are G2. The interval 81-84 (DCPG) is G3. GTP-binding positions include 81-85 (DCPGH) and 136-139 (NKVD). Residues 136 to 139 (NKVD) form a G4 region. A G5 region spans residues 174–176 (SAL).

This sequence belongs to the TRAFAC class translation factor GTPase superfamily. Classic translation factor GTPase family. EF-Tu/EF-1A subfamily. Monomer.

The protein localises to the cytoplasm. The enzyme catalyses GTP + H2O = GDP + phosphate + H(+). Functionally, GTP hydrolase that promotes the GTP-dependent binding of aminoacyl-tRNA to the A-site of ribosomes during protein biosynthesis. In Caldicellulosiruptor bescii (strain ATCC BAA-1888 / DSM 6725 / KCTC 15123 / Z-1320) (Anaerocellum thermophilum), this protein is Elongation factor Tu.